Reading from the N-terminus, the 27-residue chain is Ganodermin (27 aa).

Its function is as follows. Has antifungal activity against B.cinera, F.oxysporum and P.piricola with IC(50) values of 15.2 uM, 12.4 uM and 18.1 uM, respectively. Lacks hemagglutinating activity towards rabbit erythrocytes. Lacks deoxyribonuclease, ribonuclease and protease inhibitory activities. This is Ganodermin from Ganoderma lucidum (Ling zhi medicinal fungus).